Here is a 220-residue protein sequence, read N- to C-terminus: Phosphoserine phosphatase (220 aa).

The active-site Nucleophile is Asp-11. Positions 11 and 13 each coordinate Mg(2+). Asp-13 acts as the Proton donor in catalysis. Substrate contacts are provided by residues Glu-20, Arg-56, 99 to 100, and Lys-144; that span reads SG. Asp-167 provides a ligand contact to Mg(2+). Position 170 (Asn-170) interacts with substrate.

The protein belongs to the HAD-like hydrolase superfamily. SerB family. The cofactor is Mg(2+).

The catalysed reaction is O-phospho-L-serine + H2O = L-serine + phosphate. It carries out the reaction O-phospho-D-serine + H2O = D-serine + phosphate. Its pathway is amino-acid biosynthesis; L-serine biosynthesis; L-serine from 3-phospho-D-glycerate: step 3/3. The chain is Phosphoserine phosphatase from Idiomarina loihiensis (strain ATCC BAA-735 / DSM 15497 / L2-TR).